The sequence spans 439 residues: Methylenetetrahydrofolate--tRNA-(uracil-5-)-methyltransferase TrmFO (439 aa).

Residue 8-13 (GGGLAG) participates in FAD binding.

This sequence belongs to the MnmG family. TrmFO subfamily. FAD serves as cofactor.

It is found in the cytoplasm. It catalyses the reaction uridine(54) in tRNA + (6R)-5,10-methylene-5,6,7,8-tetrahydrofolate + NADH + H(+) = 5-methyluridine(54) in tRNA + (6S)-5,6,7,8-tetrahydrofolate + NAD(+). The enzyme catalyses uridine(54) in tRNA + (6R)-5,10-methylene-5,6,7,8-tetrahydrofolate + NADPH + H(+) = 5-methyluridine(54) in tRNA + (6S)-5,6,7,8-tetrahydrofolate + NADP(+). Catalyzes the folate-dependent formation of 5-methyl-uridine at position 54 (M-5-U54) in all tRNAs. This chain is Methylenetetrahydrofolate--tRNA-(uracil-5-)-methyltransferase TrmFO, found in Dictyoglomus thermophilum (strain ATCC 35947 / DSM 3960 / H-6-12).